A 198-amino-acid polypeptide reads, in one-letter code: Peptide deformylase (198 aa).

2 residues coordinate Fe cation: C123 and H170. The active site involves E171. H174 provides a ligand contact to Fe cation.

The protein belongs to the polypeptide deformylase family. Requires Fe(2+) as cofactor.

It catalyses the reaction N-terminal N-formyl-L-methionyl-[peptide] + H2O = N-terminal L-methionyl-[peptide] + formate. In terms of biological role, removes the formyl group from the N-terminal Met of newly synthesized proteins. Requires at least a dipeptide for an efficient rate of reaction. N-terminal L-methionine is a prerequisite for activity but the enzyme has broad specificity at other positions. The polypeptide is Peptide deformylase (Mycoplasmopsis pulmonis (strain UAB CTIP) (Mycoplasma pulmonis)).